The following is a 120-amino-acid chain: U13-lycotoxin-Ls1f (120 aa).

Residues 1 to 16 form the signal peptide; sequence MKILFVLISILYAVYC. A propeptide spanning residues 17–54 is cleaved from the precursor; it reads FSSEEDVDSAYLANELEPVEDINSEQYAALEPKEEQER. 4 cysteine pairs are disulfide-bonded: Cys56–Cys70, Cys63–Cys76, Cys69–Cys87, and Cys78–Cys85. An Agouti domain is found at 56-95; that stretch reads CAGMGQDCKDDCDCCLNIATCNCWFGRYFCSCTFGDYQTC.

This sequence belongs to the neurotoxin 05 (agouti) family. Contains 6 disulfide bonds. Expressed by the venom gland.

Its subcellular location is the secreted. The polypeptide is U13-lycotoxin-Ls1f (Lycosa singoriensis (Wolf spider)).